The sequence spans 422 residues: Steroid hormone receptor ERR1 (422 aa).

Residues 1–66 (MSSQVVGIEP…EGAGSGEQGS (66 aa)) are disordered. Residues 1–76 (MSSQVVGIEP…GKLVLSSLPK (76 aa)) are repressor domain. K14 is covalently cross-linked (Glycyl lysine isopeptide (Lys-Gly) (interchain with G-Cter in SUMO)). Phosphoserine occurs at positions 19 and 22. The nuclear receptor DNA-binding region spans 76–151 (KRLCLVCGDV…VGMLKEGVRL (76 aa)). 2 consecutive NR C4-type zinc fingers follow at residues 79–99 (CLVC…CEAC) and 115–134 (CPAS…CQAC). 4 positions are modified to N6-acetyllysine; by PCAF/KAT2B: K129, K138, K160, and K162. K189 participates in a covalent cross-link: Glycyl lysine isopeptide (Lys-Gly) (interchain with G-Cter in SUMO2). The 229-residue stretch at 192 to 420 (PVNALVSHLL…KLFLEMLEAM (229 aa)) folds into the NR LBD domain. K402 participates in a covalent cross-link: Glycyl lysine isopeptide (Lys-Gly) (interchain with G-Cter in SUMO); alternate. Residue K402 forms a Glycyl lysine isopeptide (Lys-Gly) (interchain with G-Cter in SUMO2); alternate linkage. An AF-2 domain region spans residues 402–422 (KLEGKVPMHKLFLEMLEAMMD).

The protein belongs to the nuclear hormone receptor family. NR3 subfamily. Binds DNA as a monomer or a homodimer. Interacts (via the AF2 domain) with coactivator PPARGC1A (via the L3 motif); the interaction greatly enhances transcriptional activity of genes involved in energy metabolism. Interacts with PIAS4; the interaction enhances sumoylation. Interacts with MAPK15; promotes re-localization of ESRRA to the cytoplasm through a XPO1-dependent mechanism then inhibits ESRRA transcriptional activity. Post-translationally, phosphorylation on Ser-19 enhances sumoylation on Lys-14 increasing repression of transcriptional activity. In terms of processing, sumoylated with SUMO2. Main site is Lys-14 which is enhanced by phosphorylation on Ser-19, cofactor activation, and by interaction with PIAS4. Sumoylation enhances repression of transcriptional activity, but has no effect on subcellular location nor on DNA binding. Reversibly acetylated. Acetylation by PCAF/KAT2 at Lys-129, Lys-138, Lys-160 and Lys-162 and PCAF/KAT2 decreases transcriptional activity probably by inhibiting DNA-binding activity; deacetylation involves SIRT1 and HDAC8 and increases DNA-binding. In terms of tissue distribution, most highly expressed in kidney, heart, and brown adipocytes. Also found in uterus, cervix and vagina.

It is found in the nucleus. Its subcellular location is the cytoplasm. In terms of biological role, binds to an ERR-alpha response element (ERRE) containing a single consensus half-site, 5'-TNAAGGTCA-3'. Can bind to the medium-chain acyl coenzyme A dehydrogenase (MCAD) response element NRRE-1 and may act as an important regulator of MCAD promoter. Binds to the C1 region of the lactoferrin gene promoter. Requires dimerization and the coactivator, PGC-1A, for full activity. The ERRalpha/PGC1alpha complex is a regulator of energy metabolism. Induces the expression of PERM1 in the skeletal muscle. This is Steroid hormone receptor ERR1 (Esrra) from Mus musculus (Mouse).